The sequence spans 229 residues: Probable GTP-binding protein EngB (229 aa).

The region spanning Asp53–Asp228 is the EngB-type G domain. GTP is bound by residues Gly61 to Ser68, Gly88 to Glu92, Asp106 to Gly109, Thr173 to Asp176, and Thr207 to Ser209. Residues Ser68 and Thr90 each coordinate Mg(2+).

This sequence belongs to the TRAFAC class TrmE-Era-EngA-EngB-Septin-like GTPase superfamily. EngB GTPase family. Mg(2+) serves as cofactor.

Its function is as follows. Necessary for normal cell division and for the maintenance of normal septation. The sequence is that of Probable GTP-binding protein EngB from Caulobacter vibrioides (strain NA1000 / CB15N) (Caulobacter crescentus).